The primary structure comprises 115 residues: NADH-ubiquinone oxidoreductase chain 3 (115 aa).

Transmembrane regions (helical) follow at residues 4–24 (ILTLFINITLSLCLISIAFWL), 55–75 (FFLVGITFLLFDLEIALLLPL), and 84–104 (SYLTMTVSFMLVSALALGLAY).

This sequence belongs to the complex I subunit 3 family. As to quaternary structure, core subunit of respiratory chain NADH dehydrogenase (Complex I) which is composed of 45 different subunits. Interacts with TMEM186. Interacts with TMEM242.

Its subcellular location is the mitochondrion inner membrane. It catalyses the reaction a ubiquinone + NADH + 5 H(+)(in) = a ubiquinol + NAD(+) + 4 H(+)(out). Functionally, core subunit of the mitochondrial membrane respiratory chain NADH dehydrogenase (Complex I) which catalyzes electron transfer from NADH through the respiratory chain, using ubiquinone as an electron acceptor. Essential for the catalytic activity of complex I. The polypeptide is NADH-ubiquinone oxidoreductase chain 3 (Necromys lactens (Rufous-bellied bolo mouse)).